Reading from the N-terminus, the 650-residue chain is Fructose-1,6-bisphosphatase class 3 (650 aa).

The protein belongs to the FBPase class 3 family. Mn(2+) serves as cofactor.

The enzyme catalyses beta-D-fructose 1,6-bisphosphate + H2O = beta-D-fructose 6-phosphate + phosphate. It functions in the pathway carbohydrate biosynthesis; gluconeogenesis. The protein is Fructose-1,6-bisphosphatase class 3 of Finegoldia magna (strain ATCC 29328 / DSM 20472 / WAL 2508) (Peptostreptococcus magnus).